We begin with the raw amino-acid sequence, 194 residues long: Probable GTP-binding protein EngB (194 aa).

The 173-residue stretch at 22–194 (DLPEYALAGR…AWQFIKEGME (173 aa)) folds into the EngB-type G domain. GTP-binding positions include 30-37 (GRSNVGKS), 57-61 (GKTQT), 75-78 (DVPG), 142-145 (TKAD), and 174-176 (FSS). Residues Ser37 and Thr59 each coordinate Mg(2+).

It belongs to the TRAFAC class TrmE-Era-EngA-EngB-Septin-like GTPase superfamily. EngB GTPase family. Requires Mg(2+) as cofactor.

Functionally, necessary for normal cell division and for the maintenance of normal septation. The sequence is that of Probable GTP-binding protein EngB from Listeria monocytogenes serotype 4b (strain CLIP80459).